Consider the following 413-residue polypeptide: Multifunctional CCA protein (413 aa).

ATP-binding residues include Gly-8 and Arg-11. CTP contacts are provided by Gly-8 and Arg-11. Mg(2+) is bound by residues Asp-21 and Asp-23. Arg-91, Arg-137, and Arg-140 together coordinate ATP. Positions 91, 137, and 140 each coordinate CTP. Positions 228–329 constitute an HD domain; sequence TGIHTLMVLE…VKIFDKADLW (102 aa).

The protein belongs to the tRNA nucleotidyltransferase/poly(A) polymerase family. Bacterial CCA-adding enzyme type 1 subfamily. In terms of assembly, monomer. Can also form homodimers and oligomers. Requires Mg(2+) as cofactor. Ni(2+) is required as a cofactor.

It catalyses the reaction a tRNA precursor + 2 CTP + ATP = a tRNA with a 3' CCA end + 3 diphosphate. It carries out the reaction a tRNA with a 3' CCA end + 2 CTP + ATP = a tRNA with a 3' CCACCA end + 3 diphosphate. Catalyzes the addition and repair of the essential 3'-terminal CCA sequence in tRNAs without using a nucleic acid template. Adds these three nucleotides in the order of C, C, and A to the tRNA nucleotide-73, using CTP and ATP as substrates and producing inorganic pyrophosphate. tRNA 3'-terminal CCA addition is required both for tRNA processing and repair. Also involved in tRNA surveillance by mediating tandem CCA addition to generate a CCACCA at the 3' terminus of unstable tRNAs. While stable tRNAs receive only 3'-terminal CCA, unstable tRNAs are marked with CCACCA and rapidly degraded. This Shewanella sediminis (strain HAW-EB3) protein is Multifunctional CCA protein.